Consider the following 290-residue polypeptide: UPF0761 membrane protein YihY (290 aa).

6 helical membrane-spanning segments follow: residues 44 to 64, 104 to 124, 140 to 160, 183 to 203, 210 to 230, and 244 to 264; these read LLSLVPLVAVVFALFAAFPMF, VGACGLIVTALLLMYSIDSAL, FAVYWMILTLGPLLAGASLAI, IFPLLLSWISFWLLYSIVPTI, AIVGAFVAALLFEAGKKGFAL, and VLAVIPILFVWVYWTWCIVLL.

Belongs to the UPF0761 family.

Its subcellular location is the cell inner membrane. This is UPF0761 membrane protein YihY from Escherichia coli O127:H6 (strain E2348/69 / EPEC).